We begin with the raw amino-acid sequence, 265 residues long: Thiazole synthase (265 aa).

Lysine 103 serves as the catalytic Schiff-base intermediate with DXP. 1-deoxy-D-xylulose 5-phosphate contacts are provided by residues glycine 164, 190–191 (AG), and 212–213 (NT).

The protein belongs to the ThiG family. In terms of assembly, homotetramer. Forms heterodimers with either ThiH or ThiS.

It localises to the cytoplasm. The enzyme catalyses [ThiS sulfur-carrier protein]-C-terminal-Gly-aminoethanethioate + 2-iminoacetate + 1-deoxy-D-xylulose 5-phosphate = [ThiS sulfur-carrier protein]-C-terminal Gly-Gly + 2-[(2R,5Z)-2-carboxy-4-methylthiazol-5(2H)-ylidene]ethyl phosphate + 2 H2O + H(+). Its pathway is cofactor biosynthesis; thiamine diphosphate biosynthesis. Its function is as follows. Catalyzes the rearrangement of 1-deoxy-D-xylulose 5-phosphate (DXP) to produce the thiazole phosphate moiety of thiamine. Sulfur is provided by the thiocarboxylate moiety of the carrier protein ThiS. In vitro, sulfur can be provided by H(2)S. In Bordetella avium (strain 197N), this protein is Thiazole synthase.